Here is a 1795-residue protein sequence, read N- to C-terminus: Type III effector AvrE (1795 aa).

The span at 1–18 (MQSPSIHRNTGSIIQPTV) shows a compositional bias: polar residues. The segment at 1 to 227 (MQSPSIHRNT…PPREPMLWRS (227 aa)) is disordered. Over residues 60-75 (KSKAPQQKAATPPTAK) the composition is skewed to low complexity. 2 stretches are compositionally biased toward polar residues: residues 97 to 109 (GFSN…THSA) and 117 to 127 (HPNQASSSGAQ). A compositionally biased stretch (basic and acidic residues) spans 129–154 (HEIHPEAAPRKNLRVRFDLPQDRLER). A compositionally biased stretch (polar residues) spans 174–191 (ATRQFRSPDSHLQGSDGT). Residues 203–215 (PSSSGSKIGDSDG) show a composition bias toward low complexity. 2 consecutive short sequence motifs (wxxxE) follow at residues 393–397 (WKIPE) and 829–833 (WQRFE). Residues 1461-1488 (QIGGSHTAPTGTPASAPGPTPASQTAAN) form a disordered region. The span at 1467 to 1487 (TAPTGTPASAPGPTPASQTAA) shows a compositional bias: low complexity. The ERMRS signature appears at 1787–1790 (KKEG).

The protein belongs to the AvrE family. In planta interaction assays, interacts with the A.thaliana protein phosphatase 2A (PP2A) via direct interaction/association with specific B' regulatory subunits.

Its subcellular location is the secreted. The protein localises to the host cell. It localises to the host cell membrane. With respect to regulation, polyamidoamine dendrimers inhibit channel and virulence activities. Functionally, major virulence factor that may function as a water- and solute-permeable channel dedicated to creating osmotic/water potential perturbation and a water- and nutrient-rich apoplast in which bacteria multiply within the infected plant tissues. Expression in Xenopus oocytes results in inward and outward currents, permeability to water and osmolarity-dependent oocyte swelling and bursting. Elicits cell death in host tomato leaves and in non-host Nicotiana tabacum leaves. Acts within plant cells and promotes lesion formation. The combined action of AvrE and HopM1 is particularly important in promoting bacterial growth in plants. Contributes to the down-regulation of a specific subset of A.thaliana genes during infection, including NHL13, which is required for antibacterial immunity. This is Type III effector AvrE from Pseudomonas syringae pv. tomato (strain ATCC BAA-871 / DC3000).